Consider the following 472-residue polypeptide: 4-aminobutyrate aminotransferase (472 aa).

135–136 (GA) lines the pyridoxal 5'-phosphate pocket. Arginine 193 serves as a coordination point for substrate. The residue at position 327 (lysine 327) is an N6-(pyridoxal phosphate)lysine. Threonine 352 is a binding site for pyridoxal 5'-phosphate.

This sequence belongs to the class-III pyridoxal-phosphate-dependent aminotransferase family. Homodimer and homotetramer. The cofactor is pyridoxal 5'-phosphate.

Its subcellular location is the cytoplasm. It catalyses the reaction 4-aminobutanoate + 2-oxoglutarate = succinate semialdehyde + L-glutamate. It participates in amino-acid degradation; L-arginine degradation. In terms of biological role, required for the degradation of gamma-aminobutyric acid (GABA), which is important for utilization of GABA as nitrogen source and for oxidative stress tolerance. Deaminates GABA to succinate semialdehyde, which in turn is converted to succinate by the succinate-semialdehyde dehydrogenase UGA2. May be involved in an alternative, arginase-independent arginine degradation pathway via GABA. The protein is 4-aminobutyrate aminotransferase of Kluyveromyces lactis (strain ATCC 8585 / CBS 2359 / DSM 70799 / NBRC 1267 / NRRL Y-1140 / WM37) (Yeast).